The sequence spans 59 residues: U-myrmeciitoxin(01)-Mg5a (59 aa).

An N-terminal signal peptide occupies residues 1-21 (MRLSYLSLALAIIFVLTIMHA). The propeptide occupies 22-38 (SNVEAKASADPEPDAVG).

Expressed by the venom gland.

Its subcellular location is the secreted. Its function is as follows. May have antimicrobial properties, like most ant linear peptides. This chain is U-myrmeciitoxin(01)-Mg5a, found in Myrmecia gulosa (Red bulldog ant).